Consider the following 15639-residue polypeptide: FR901469 synthetase (15639 aa).

The Carrier 1 domain occupies 5–81 (HTSDGLRKLL…DLVDKIIEQQ (77 aa)). Position 42 is an O-(pantetheine 4'-phosphoryl)serine (Ser-42). Residues 82 to 94 (LEEEEEDDDSLDN) show a composition bias toward acidic residues. The segment at 82–105 (LEEEEEDDDSLDNESERDHSQKDL) is disordered. Positions 140 to 553 (PCLSMQEGCL…RDFLPLTEDD (414 aa)) are condensation 1. An adenylation 1 region spans residues 579–971 (TISKQPDAVA…LGRRDTQVKI (393 aa)). In terms of domain architecture, Carrier 2 spans 1108–1184 (TPATAIEKEL…ELALVARSTT (77 aa)). Position 1145 is an O-(pantetheine 4'-phosphoryl)serine (Ser-1145). An epimerase 1 region spans residues 1219-1626 (RSSNRFNQSV…TITHLVKRLA (408 aa)). The interval 1667–2097 (EDVLPCTPIQ…LGNLSLLTNN (431 aa)) is condensation 2. Residues 2122–2518 (QEAAKEYTNA…GRRDNQIKIR (397 aa)) form an adenylation 2 region. Residues 2654-2730 (VPATALEKQL…ELALKAKSTT (77 aa)) enclose the Carrier 3 domain. At Ser-2691 the chain carries O-(pantetheine 4'-phosphoryl)serine. Positions 2761–3176 (VSAGEHRYNQ…TELLHRLEQM (416 aa)) are epimerase 2. The condensation 3 stretch occupies residues 3215 to 3640 (QDIYPCSPTQ…DDLIMMSPED (426 aa)). The interval 3669–4059 (TQPHAPAVAA…MGRIDSQIKI (391 aa)) is adenylation 3. In terms of domain architecture, Carrier 4 spans 4193 to 4269 (PPSNDAERMV…QLAAIVTQRG (77 aa)). Residue Ser-4230 is modified to O-(pantetheine 4'-phosphoryl)serine. A condensation 4 region spans residues 4316-4714 (EDVYPCTPLQ…ILAHGTGLEE (399 aa)). An adenylation 4 region spans residues 4756–5149 (TEAASTRPDA…GRLDTQAKLR (394 aa)). Positions 5284–5360 (EPATIMERQL…DLASHIDHHT (77 aa)) constitute a Carrier 5 domain. Residue Ser-5321 is modified to O-(pantetheine 4'-phosphoryl)serine. A condensation 5 region spans residues 5402-5802 (EDIYPCTPLQ…TVFAQLCDSS (401 aa)). The segment at 5847–6238 (KYPNEPAVHA…LGRRDSQMKV (392 aa)) is adenylation 5. The 77-residue stretch at 6375-6451 (QPSTTAEIKL…DMAKIVEEHV (77 aa)) folds into the Carrier 6 domain. Residue Ser-6412 is modified to O-(pantetheine 4'-phosphoryl)serine. Positions 6494–6889 (EDVYPATPLQ…RFAKVYQQLS (396 aa)) are condensation 6. Residues 6952–7335 (WDGSMTYAEL…GRRDTQIKIR (384 aa)) are adenylation 6. The Carrier 7 domain occupies 7473–7546 (TAMEEQLRTV…QLALLASTDE (74 aa)). O-(pantetheine 4'-phosphoryl)serine is present on Ser-7507. The tract at residues 7580-7992 (MGENRYNQSV…SKTLEELTTQ (413 aa)) is epimerase 3. A condensation 7 region spans residues 8034–8459 (EDVFPASPMQ…QRMRNISLAS (426 aa)). Residues 8486–8882 (QKSVHARPDA…GRRDTQVKIR (397 aa)) form an adenylation 7 region. Positions 9015-9091 (QPATDAERQL…DLAKTIQDSE (77 aa)) constitute a Carrier 8 domain. At Ser-9052 the chain carries O-(pantetheine 4'-phosphoryl)serine. Positions 9136–9535 (EDVYPCTPLQ…FAAIFRQLCD (400 aa)) are condensation 8. The adenylation 8 stretch occupies residues 9583–9974 (KNPHAIAVNA…GRRDNQMKIR (392 aa)). One can recognise a Carrier 9 domain in the interval 10110 to 10186 (EPATPMEMQL…GLAALIQKQI (77 aa)). Ser-10147 carries the post-translational modification O-(pantetheine 4'-phosphoryl)serine. The tract at residues 10186–10208 (IDEEEEYDDSEEEEEDDEEEVRE) is disordered. Positions 10187-10206 (DEEEEYDDSEEEEEDDEEEV) are enriched in acidic residues. The interval 10240–10662 (VEDVYPCTPL…VLSETDKTKI (423 aa)) is condensation 9. The adenylation 9 stretch occupies residues 10683–11082 (KQAIERPNAP…GRRDTQIKIR (400 aa)). The Carrier 10 domain occupies 11217–11293 (EPATGMERHL…DLARETESQG (77 aa)). Position 11254 is an O-(pantetheine 4'-phosphoryl)serine (Ser-11254). The condensation 10 stretch occupies residues 11329 to 11725 (EDVYPCTPLQ…ETIFQQLSSV (397 aa)). The adenylation 10 stretch occupies residues 11770–12165 (FKRTADKQPE…GRRDTQIKVR (396 aa)). In terms of domain architecture, Carrier 11 spans 12298 to 12374 (EPSTEMERRI…DLAAAVQGRI (77 aa)). O-(pantetheine 4'-phosphoryl)serine is present on Ser-12335. The segment at 12418 to 12830 (EDVYPATPLQ…IQDIEMVSEQ (413 aa)) is condensation 11. The interval 12861–13249 (SRADEIAICA…GRRDTQIKIR (389 aa)) is adenylation 11. In terms of domain architecture, Carrier 12 spans 13383–13459 (MPGTVQEEQL…QLGQKVKEAV (77 aa)). Position 13420 is an O-(pantetheine 4'-phosphoryl)serine (Ser-13420). The interval 13476–13901 (APIQQMFFEQ…LKDMTSTLLQ (426 aa)) is epimerase 4. Positions 13940–14369 (EDILPCSPIQ…SIVGEHDLQQ (430 aa)) are condensation 12. The segment at 14390–14789 (RDAAHRTPDA…GRGDGQIKIR (400 aa)) is adenylation 12. The Carrier 13 domain occupies 14916–14992 (LPASADEGAL…DMASVASAAR (77 aa)). The residue at position 14953 (Ser-14953) is an O-(pantetheine 4'-phosphoryl)serine. A condensation 13 region spans residues 15062–15433 (QHAVDLAALK…DIMVRLASQQ (372 aa)). Disordered stretches follow at residues 15434 to 15511 (EGTV…ENRQ) and 15617 to 15639 (VQTNGHAGKGVTNGVNGGSKGHI). Over residues 15455-15472 (NGTNGSNGDGTDAANGIG) the composition is skewed to low complexity. Basic and acidic residues predominate over residues 15482–15494 (AVEKSSGDAEVEK). The span at 15495 to 15511 (VSTNGHADNNTSAENRQ) shows a compositional bias: polar residues.

This sequence belongs to the NRP synthetase family.

It functions in the pathway antifungal biosynthesis. Its function is as follows. Nonribosomal peptide synthetase; part of the gene cluster that mediates the biosynthesis of the antifungal antibiotic FR901469, an inhibitor of beta-1,3-glucansynthase, exerting antifungal activity against the pathogenes Candida albicans and Aspergillus fumigatus. FR901469 is a cyclic depsipeptide containing 12 amino acid residues and a fatty acid chain. The NRPS frbI contains 12 modules responsible for the formation of the depsipeptide backbone which is denoted as Acyl-Thr-Ala-Tyr-Val-4OHPro-Thr-Thr-3OHPro-threo3OHGln-Gly-Thr-Orn-OH (C71H116N14O23). The PKS frbB is probably involved in the production of the hydrocarbon chain, and the acyl-CoA ligase frbC might be involved in the transport of the chain to the peptide ptoduct of frbI. Because FR901469 contains 3 hydroxylated amino acid residues, the 3 oxygenases frbA, frbH, and frbJ might be participating in amino acid hydroxylation. As no thioesterase domains were detected in frbI or frbB, the thioesterases frbD and frbE may instead release and cyclize the products of the NRPS and PKS, respectively. The protein is FR901469 synthetase of Dothideomycetidae sp. (strain 11243) (Fungal sp. (strain No.11243)).